Reading from the N-terminus, the 38-residue chain is uncharacterized protein (38 aa).

Belongs to the asfivirus C84L family.

This is an uncharacterized protein from Ornithodoros (relapsing fever ticks).